We begin with the raw amino-acid sequence, 440 residues long: Protein disulfide-isomerase 2-3 (440 aa).

The first 24 residues, Met-1–Ala-24, serve as a signal peptide directing secretion. Thioredoxin domains follow at residues Leu-25–Lys-136 and Ser-154–Glu-269. Catalysis depends on nucleophile residues Cys-60 and Cys-63. A disulfide bridge connects residues Cys-60 and Cys-63. Residues Leu-143 to Ala-163 form a disordered region. N-linked (GlcNAc...) asparagine glycosylation occurs at Asn-168. Active-site nucleophile residues include Cys-192 and Cys-195. Residues Cys-192 and Cys-195 are joined by a disulfide bond. Residues Lys-437–Leu-440 carry the Prevents secretion from ER motif.

It belongs to the protein disulfide isomerase family. In terms of tissue distribution, widely expressed.

The protein resides in the endoplasmic reticulum lumen. The enzyme catalyses Catalyzes the rearrangement of -S-S- bonds in proteins.. Acts as a protein-folding catalyst that interacts with nascent polypeptides to catalyze the formation, isomerization, and reduction or oxidation of disulfide bonds. The protein is Protein disulfide-isomerase 2-3 (PDIL2-3) of Arabidopsis thaliana (Mouse-ear cress).